We begin with the raw amino-acid sequence, 307 residues long: Protoheme IX farnesyltransferase (307 aa).

9 helical membrane-spanning segments follow: residues 31–51 (VTQL…PGMV), 55–75 (VLIG…AINC), 103–123 (TLVF…VYAN), 125–145 (LTMW…TILL), 153–173 (IVIG…AVAG), 179–199 (AWFL…ALAL), 223–243 (LLHI…PFVY), 246–266 (SGYI…AYAW), and 285–305 (ILYL…KFVP).

This sequence belongs to the UbiA prenyltransferase family. Protoheme IX farnesyltransferase subfamily.

The protein resides in the cell inner membrane. It catalyses the reaction heme b + (2E,6E)-farnesyl diphosphate + H2O = Fe(II)-heme o + diphosphate. It participates in porphyrin-containing compound metabolism; heme O biosynthesis; heme O from protoheme: step 1/1. In terms of biological role, converts heme B (protoheme IX) to heme O by substitution of the vinyl group on carbon 2 of heme B porphyrin ring with a hydroxyethyl farnesyl side group. This chain is Protoheme IX farnesyltransferase, found in Cupriavidus necator (strain ATCC 17699 / DSM 428 / KCTC 22496 / NCIMB 10442 / H16 / Stanier 337) (Ralstonia eutropha).